The sequence spans 61 residues: [Thr6]-bradykinyl-Val,Asp (61 aa).

The signal sequence occupies residues 1 to 22 (MSFLKKSLFLVLFLGLVSFSIC). Residues 23–50 (EEEKRETEEEENEDEMDKESEEKRESPE) constitute a propeptide that is removed on maturation. A disordered region spans residues 24–61 (EEKRETEEEENEDEMDKESEEKRESPERPPGFTPFRVD). Residues 30 to 41 (EEEENEDEMDKE) are compositionally biased toward acidic residues. Proline 53 carries the 4-hydroxyproline; in form [Hyp3,Thr6]-bradykinyl-Val,Asp and [Hyp3,Thr6]-bradykinin modification.

This sequence belongs to the frog skin active peptide (FSAP) family. Bradykinin-related peptide subfamily. Expressed by the skin glands.

It is found in the secreted. Functionally, induces relaxation of rat smooth muscle from tail artery (EC(50)=16.8 nM) and contraction of that from ileum (EC(50)=205 nM), urinary bladder (EC(50)=895 nM) and uterus (EC(50)=60.3 nM). Binds to both bradykinin receptor B1 (BDKRB1) and B2 (BDKRB2). In terms of biological role, [Hyp3,Thr6]-bradykinin: Induces relaxation of rat smooth muscle from tail artery (EC(50)=56.7 nM) and contraction of that from ileum (EC(50)=588 nM), urinary bladder (EC(50)=4.6 uM) and uterus (EC(50)=3.9 nM). Binds to both bradykinin receptor B1 (BDKRB1) and B2 (BDKRB2). In arterial smooth muscle, the effect via BDKRB1 is stronger, in uterus, ileum and urinary bladder that via BDKRB2. Its function is as follows. Induces relaxation of rat smooth muscle from tail artery (EC(50)=10.8 nM) and contraction of that from ileum (EC(50)=645 nM), urinary bladder (EC(50)=1.1 uM) and uterus (EC(50)=1.2 uM). Binds to both bradykinin receptor B1 (BDKRB1) and B2 (BDKRB2). Apart from uterus smooth muscle, the effect via B2 is stronger. [Hyp3,Thr6]-bradykinyl-Val,Asp: Induces relaxation of rat smooth muscle from tail artery (EC(50)=3.5 nM) and contraction of that from ileum (EC(50)=223 nM), urinary bladder (EC(50)=1.5 uM) and uterus (EC(50)=356 nM). Binds to both bradykinin receptor B1 (BDKRB1) and B2 (BDKRB2); the effects via B2 a stronger. The polypeptide is [Thr6]-bradykinyl-Val,Asp (Agalychnis callidryas (Red-eyed tree frog)).